A 344-amino-acid chain; its full sequence is Lysophosphatidic acid receptor 6 (344 aa).

Residues 1–19 (MVSVNSSHCFYNDSFKYTL) lie on the Extracellular side of the membrane. An N-linked (GlcNAc...) asparagine glycan is attached at Asn5. Residues 20–46 (YGCMFSMVFVLGLISNCVAIYIFICVL) traverse the membrane as a helical segment. The Cytoplasmic portion of the chain corresponds to 47–55 (KVRNETTTY). A helical membrane pass occupies residues 56 to 79 (MINLAMSDLLFVFTLPFRIFYFTT). Topologically, residues 80–92 (RNWPFGDLLCKIS) are extracellular. Cys89 and Cys168 are joined by a disulfide. A helical membrane pass occupies residues 93–112 (VMLFYTNMYGSILFLTCISV). Topologically, residues 113 to 133 (DRFLAIVYPFKSKTLRTKRNA) are cytoplasmic. The chain crosses the membrane as a helical span at residues 134 to 154 (KIVCTGVWLTVIGGSAPAVFV). Residues 155–181 (QSTHSQGNNASEACFENFPEATWKTYL) lie on the Extracellular side of the membrane. A helical transmembrane segment spans residues 182-209 (SRIVIFIEIVGFFIPLILNVTCSSMVLK). Residues 210 to 227 (TLTKPVTLSRSKINKTKV) are Cytoplasmic-facing. The helical transmembrane segment at 228–253 (LKMIFVHLIIFCFCFVPYNINLILYS) threads the bilayer. Over 254–272 (LVRTQTFVNCSVVAAVRTM) the chain is Extracellular. The chain crosses the membrane as a helical span at residues 273–292 (YPITLCIAVSNCCFDPIVYY). A lipid anchor (S-palmitoyl cysteine) is attached at Cys284. Over 293-344 (FTSDTIQNSIKMKNWSVRRSDFRFSEVHGAENFIQHNLQTLKSKIFDNESAA) the chain is Cytoplasmic.

The protein belongs to the G-protein coupled receptor 1 family. Expressed ubiquitously, including in skin and hair follicle cells. Detected in both Henle's and Huxley's layers of the inner root sheath of the hair follicle and in suprabasal layers of the epidermis (at protein level). Expressed at low levels in peripheral blood leukocytes.

It localises to the cell membrane. Binds to oleoyl-L-alpha-lysophosphatidic acid (LPA). Intracellular cAMP is involved in the receptor activation. Important for the maintenance of hair growth and texture. The polypeptide is Lysophosphatidic acid receptor 6 (LPAR6) (Homo sapiens (Human)).